Here is a 528-residue protein sequence, read N- to C-terminus: Coiled-coil domain-containing protein 116 (528 aa).

The segment at 43 to 68 (GHVPHPPSTCGSSALQNQRRNKRHPQ) is disordered. The segment covering 51 to 60 (TCGSSALQNQ) has biased composition (polar residues). Residues 81–104 (HVLDSLETVVEKATERMAAMKTEA) are a coiled coil. Disordered regions lie at residues 335–444 (PLFP…RQRA) and 497–528 (SSSP…THHS). The segment covering 363-378 (PTNSGQPHPTVSSPKT) has biased composition (polar residues). Position 389 is a phosphoserine (serine 389). Residues 419-429 (HSREKEPDSDP) are compositionally biased toward basic and acidic residues. Positions 434-443 (PPVSLSSRQR) are enriched in polar residues. Residues 497-510 (SSSPSSLCPEVTSS) are compositionally biased toward low complexity.

The protein resides in the cytoplasm. Its subcellular location is the cytoskeleton. It localises to the microtubule organizing center. It is found in the centrosome. The chain is Coiled-coil domain-containing protein 116 (CCDC116) from Macaca fascicularis (Crab-eating macaque).